We begin with the raw amino-acid sequence, 203 residues long: Excretory canal abnormal exc-13 (203 aa).

Positions 1–20 (MIGFLKFALIGTVLLGVANG) are cleaved as a signal peptide. 3 N-linked (GlcNAc...) asparagine glycosylation sites follow: Asn-32, Asn-84, and Asn-188.

This sequence belongs to the UPF0376 family.

It localises to the secreted. The chain is Excretory canal abnormal exc-13 from Caenorhabditis elegans.